The sequence spans 265 residues: Mlc titration factor A (265 aa).

Histidine 111, histidine 148, histidine 152, and glutamate 211 together coordinate Zn(2+).

The protein belongs to the MtfA family. In terms of assembly, interacts with Mlc. Zn(2+) is required as a cofactor.

Its subcellular location is the cytoplasm. Functionally, involved in the modulation of the activity of the glucose-phosphotransferase system (glucose-PTS). Interacts with the transcriptional repressor Mlc, preventing its interaction with DNA and leading to the modulation of expression of genes regulated by Mlc, including ptsG, which encodes the PTS system glucose-specific EIICB component. In terms of biological role, shows zinc-dependent metallopeptidase activity. This chain is Mlc titration factor A, found in Escherichia coli O9:H4 (strain HS).